A 140-amino-acid polypeptide reads, in one-letter code: Auxin-responsive protein IAA26 (140 aa).

A disordered region spans residues 1 to 40 (MASYGDDGVELTELTLGPPGASARRARRGRKNGHPPPSSS). The short motif at 14–18 (LTLGP) is the EAR-like (transcriptional repression) element. Positions 24-33 (RRARRGRKNG) are enriched in basic residues. Positions 45-130 (AYFVKVSMDG…SCKRMRVMRA (86 aa)) constitute a PB1 domain.

The protein belongs to the Aux/IAA family. In terms of assembly, homodimers and heterodimers. Expressed in roots, seedlings and flowers.

Its subcellular location is the nucleus. Its function is as follows. Aux/IAA proteins are short-lived transcriptional factors that function as repressors of early auxin response genes at low auxin concentrations. The polypeptide is Auxin-responsive protein IAA26 (IAA26) (Oryza sativa subsp. japonica (Rice)).